Here is a 715-residue protein sequence, read N- to C-terminus: Tensin-4 (715 aa).

A signal peptide spans 1 to 18; that stretch reads MSQVMSSPLLAGGHAVSL. Phosphoserine is present on Ser-82. Disordered regions lie at residues 159-183, 195-251, 291-364, and 376-435; these read RCHD…RSGG, RSSS…SPLV, SLLH…CPPS, and LING…ARDM. A compositionally biased stretch (polar residues) spans 197 to 206; the sequence is SSESLIFSGN. Phosphoserine is present on Ser-248. The segment covering 291–325 has biased composition (low complexity); sequence SLLHSSNSSHQSSSRSLESPANSSSSLHSLGSVSL. An SH2 domain is found at 449-556; the sequence is WFKPNITREQ…ALPCKLTIPQ (108 aa). The 124-residue stretch at 582–705 folds into the PTB domain; sequence CHTLYLSSVS…QPASQVIGLV (124 aa).

The protein belongs to the PTEN phosphatase protein family. As to quaternary structure, interacts (via SH2 domain) with Rho GTPase-activating protein DLC1 (via C-terminus); the interaction is independent of DLC1 tyrosine phosphorylation. Interacts with integrin ITGB1; the interaction displaces tensin TNS3 from the ITGB1 cytoplasmic tail and promotes ITGB1 stability. Interacts (via SH2 domain) with E3 ubiquitin-protein ligase CBL (phosphorylated on 'Tyr-774'); the interaction is enhanced in the presence of EGF and reduces interaction of CBL with EGFR. Interacts (via SH2 domain) with receptor tyrosine kinase MET (when phosphorylated); the interaction increases MET protein stability. Post-translationally, proteolytically cleaved by caspase-3 during apoptosis. In terms of tissue distribution, expressed at low levels in colon (at protein level). Expressed in prostate and placenta.

The protein localises to the cell junction. It localises to the focal adhesion. Its subcellular location is the cytoplasm. It is found in the cytoskeleton. Its function is as follows. Promotes EGF-induced cell migration by displacing tensin TNS3 from the cytoplasmic tail of integrin ITGB1 which results in dissociation of TNS3 from focal adhesions, disassembly of actin stress fibers and initiation of cell migration. Suppresses ligand-induced degradation of EGFR by reducing EGFR ubiquitination in the presence of EGF. Increases MET protein stability by inhibiting MET endocytosis and subsequent lysosomal degradation which leads to increased cell survival, proliferation and migration. This Homo sapiens (Human) protein is Tensin-4 (TNS4).